Here is a 249-residue protein sequence, read N- to C-terminus: Deoxyribose-phosphate aldolase (249 aa).

The Proton donor/acceptor role is filled by D105. Residue K168 is the Schiff-base intermediate with acetaldehyde of the active site. Residue K216 is the Proton donor/acceptor of the active site.

It belongs to the DeoC/FbaB aldolase family. DeoC type 1 subfamily.

It is found in the cytoplasm. It catalyses the reaction 2-deoxy-D-ribose 5-phosphate = D-glyceraldehyde 3-phosphate + acetaldehyde. It functions in the pathway carbohydrate degradation; 2-deoxy-D-ribose 1-phosphate degradation; D-glyceraldehyde 3-phosphate and acetaldehyde from 2-deoxy-alpha-D-ribose 1-phosphate: step 2/2. Its function is as follows. Catalyzes a reversible aldol reaction between acetaldehyde and D-glyceraldehyde 3-phosphate to generate 2-deoxy-D-ribose 5-phosphate. This Corynebacterium jeikeium (strain K411) protein is Deoxyribose-phosphate aldolase.